The sequence spans 302 residues: Phospho-N-acetylmuramoyl-pentapeptide-transferase (302 aa).

Transmembrane regions (helical) follow at residues 1–21 (MIAASFLLNLLIYPFLINLFR), 42–62 (GTPTMGGILFVLIGLLFGVLS), 67–87 (VILTGAFLFFLIGFLDDFLSI), 101–121 (ALLQIAAASVVIAFSQPETAV), 123–143 (FFGIKLEMGAWYYLLALIVIV), 154–174 (GLDGLAGWVYISGAIPYWFFL), 178–198 (GFSENIIILLSAGVLAFLIFN), 204–224 (IFMGDTGSIALGGTLGVVSVL), 229–249 (FYLIVFFPILVVETLSVILQI), and 279–299 (IVAVFTIFNLISSLIALEVFG).

It belongs to the glycosyltransferase 4 family. MraY subfamily. Mg(2+) is required as a cofactor.

Its subcellular location is the cell inner membrane. It carries out the reaction UDP-N-acetyl-alpha-D-muramoyl-L-alanyl-gamma-D-glutamyl-meso-2,6-diaminopimeloyl-D-alanyl-D-alanine + di-trans,octa-cis-undecaprenyl phosphate = di-trans,octa-cis-undecaprenyl diphospho-N-acetyl-alpha-D-muramoyl-L-alanyl-D-glutamyl-meso-2,6-diaminopimeloyl-D-alanyl-D-alanine + UMP. The protein operates within cell wall biogenesis; peptidoglycan biosynthesis. Functionally, catalyzes the initial step of the lipid cycle reactions in the biosynthesis of the cell wall peptidoglycan: transfers peptidoglycan precursor phospho-MurNAc-pentapeptide from UDP-MurNAc-pentapeptide onto the lipid carrier undecaprenyl phosphate, yielding undecaprenyl-pyrophosphoryl-MurNAc-pentapeptide, known as lipid I. The chain is Phospho-N-acetylmuramoyl-pentapeptide-transferase from Thermotoga neapolitana (strain ATCC 49049 / DSM 4359 / NBRC 107923 / NS-E).